The sequence spans 584 residues: Kinesin-like protein KIN-10C (584 aa).

Residues 11–324 (PVRVVLRVRP…VSLAARSRHV (314 aa)) form the Kinesin motor domain. ATP is bound at residue 99-106 (GATGSGKT). Disordered regions lie at residues 377 to 398 (SMSH…AMDQ) and 445 to 469 (DKTG…KQRT).

The protein belongs to the TRAFAC class myosin-kinesin ATPase superfamily. Kinesin family. KIN-10 subfamily.

The chain is Kinesin-like protein KIN-10C from Oryza sativa subsp. japonica (Rice).